Reading from the N-terminus, the 323-residue chain is Leucine-rich repeat-containing protein 46 (323 aa).

LRR repeat units follow at residues 49-70, 71-92, 93-114, and 115-135; these read DLET…ERLR, NIHS…ACIT, SLRF…LDLQ, and YLQF…DELP. Positions 146 to 188 constitute an LRRCT domain; that stretch reads NPCTNQDGYRKMVIGALPLLLDLDKQPILERWTSDEEDKSSDE. Threonine 178 bears the Phosphothreonine mark. Residues serine 179, serine 185, and serine 186 each carry the phosphoserine modification. Positions 203 to 228 form a coiled coil; sequence RGFFKDLEQELHQHQERRQQAALTEH. The disordered stretch occupies residues 252-323; sequence DCSPAVTEEP…TKSTNKRGTK (72 aa). Positions 269–290 are enriched in polar residues; sequence ATSSTQMASSSKKQVPRNQKGS. Low complexity predominate over residues 297–310; it reads ALAATASKTSLAAA. Phosphoserine is present on serine 303.

It is found in the cell projection. The protein localises to the cilium. The protein resides in the flagellum. Required for normal spermatogenesis and male fertility. Plays an important role in sperm flagellum biogenesis. The polypeptide is Leucine-rich repeat-containing protein 46 (Lrrc46) (Rattus norvegicus (Rat)).